A 273-amino-acid polypeptide reads, in one-letter code: Homeobox protein Nkx-2.2 (273 aa).

Disordered regions lie at residues 1–56 and 91–131; these read MSLT…LDAV and AASA…KRKR. Acidic residues predominate over residues 20–38; that stretch reads DTNDEEGSVAEGPEEESEG. The homeobox DNA-binding region spans 128–187; it reads KRKRRVLFSKAQTYELERRFRQQRYLSAPEREHLASLIRLTPTQVKIWFQNHRYKMKRAR.

The protein belongs to the NK-2 homeobox family. In terms of assembly, interacts with OLIG2.

The protein localises to the nucleus. Functionally, transcriptional activator involved in the development of insulin-producting beta cells in the endocrine pancreas. May also be involved in specifying diencephalic neuromeric boundaries, and in controlling the expression of genes that play a role in axonal guidance. Binds to elements within the NEUROD1 promoter. This is Homeobox protein Nkx-2.2 (NKX2-2) from Mesocricetus auratus (Golden hamster).